Consider the following 379-residue polypeptide: 3-dehydroquinate synthase (379 aa).

NAD(+) contacts are provided by residues 67 to 72 (PGEKNK), 101 to 105 (GIILD), 125 to 126 (TT), Lys138, and Lys147. The Zn(2+) site is built by Glu180, His242, and His258.

This sequence belongs to the sugar phosphate cyclases superfamily. Dehydroquinate synthase family. NAD(+) serves as cofactor. It depends on Co(2+) as a cofactor. Zn(2+) is required as a cofactor.

It is found in the cytoplasm. It carries out the reaction 7-phospho-2-dehydro-3-deoxy-D-arabino-heptonate = 3-dehydroquinate + phosphate. It functions in the pathway metabolic intermediate biosynthesis; chorismate biosynthesis; chorismate from D-erythrose 4-phosphate and phosphoenolpyruvate: step 2/7. In terms of biological role, catalyzes the conversion of 3-deoxy-D-arabino-heptulosonate 7-phosphate (DAHP) to dehydroquinate (DHQ). The sequence is that of 3-dehydroquinate synthase from Chlamydia caviae (strain ATCC VR-813 / DSM 19441 / 03DC25 / GPIC) (Chlamydophila caviae).